The chain runs to 503 residues: Inosine-5'-monophosphate dehydrogenase (503 aa).

K(+) contacts are provided by Gly20 and Ser22. 2 consecutive CBS domains span residues 103–163 (FVVS…ETKV) and 167–228 (MTPF…LVDS). 261-263 (DSS) contacts NAD(+). 4 residues coordinate K(+): Asp264, Phe266, Gly314, and Gly316. 312–314 (GIG) contributes to the NAD(+) binding site. IMP is bound at residue Ser317. Cys319 serves as a coordination point for K(+). Residue Cys319 is the Thioimidate intermediate of the active site. Residues 358-360 (DGG), 381-382 (GR), and 405-409 (YWGEG) contribute to the IMP site. Arg418 (proton acceptor) is an active-site residue. Glu431 serves as a coordination point for IMP. K(+)-binding residues include Asn460, Glu485, Gly486, and Gly487.

The protein belongs to the IMPDH/GMPR family. Homotetramer. It depends on K(+) as a cofactor.

The protein localises to the cytoplasm. The enzyme catalyses IMP + NAD(+) + H2O = XMP + NADH + H(+). The protein operates within purine metabolism; XMP biosynthesis via de novo pathway; XMP from IMP: step 1/1. Its activity is regulated as follows. Mycophenolic acid (MPA) is a non-competitive inhibitor that prevents formation of the closed enzyme conformation by binding to the same site as the amobile flap. In contrast, mizoribine monophosphate (MZP) is a competitive inhibitor that induces the closed conformation. MPA is a potent inhibitor of mammalian IMPDHs but a poor inhibitor of the bacterial enzymes. MZP is a more potent inhibitor of bacterial IMPDH. Its function is as follows. Catalyzes the conversion of inosine 5'-phosphate (IMP) to xanthosine 5'-phosphate (XMP), the first committed and rate-limiting step in the de novo synthesis of guanine nucleotides, and therefore plays an important role in the regulation of cell growth. Could also have a single-stranded nucleic acid-binding activity and could play a role in RNA and/or DNA metabolism. This is Inosine-5'-monophosphate dehydrogenase from Tritrichomonas foetus (Trichomonas foetus).